Consider the following 350-residue polypeptide: Glycerol-1-phosphate dehydrogenase [NAD(P)+] (350 aa).

Residues 97–101 and 119–122 contribute to the NAD(+) site; these read GSKID and TTPS. Residue Asp-124 participates in substrate binding. Ser-128 serves as a coordination point for NAD(+). Asp-171 contributes to the substrate binding site. 2 residues coordinate Zn(2+): Asp-171 and His-251. Substrate is bound at residue His-255. Position 267 (His-267) interacts with Zn(2+).

It belongs to the glycerol-1-phosphate dehydrogenase family. Requires Zn(2+) as cofactor.

The protein localises to the cytoplasm. It carries out the reaction sn-glycerol 1-phosphate + NAD(+) = dihydroxyacetone phosphate + NADH + H(+). The enzyme catalyses sn-glycerol 1-phosphate + NADP(+) = dihydroxyacetone phosphate + NADPH + H(+). The protein operates within membrane lipid metabolism; glycerophospholipid metabolism. Catalyzes the NAD(P)H-dependent reduction of dihydroxyacetonephosphate (DHAP or glycerone phosphate) to glycerol 1-phosphate (G1P). The G1P thus generated is used as the glycerophosphate backbone of phospholipids in the cellular membranes of Archaea. The sequence is that of Glycerol-1-phosphate dehydrogenase [NAD(P)+] from Picrophilus torridus (strain ATCC 700027 / DSM 9790 / JCM 10055 / NBRC 100828 / KAW 2/3).